The chain runs to 140 residues: Nucleoside diphosphate kinase (140 aa).

Positions 11, 59, 87, 93, 104, and 114 each coordinate ATP. The active-site Pros-phosphohistidine intermediate is H117.

The protein belongs to the NDK family. In terms of assembly, homotetramer. The cofactor is Mg(2+).

The protein resides in the cytoplasm. The enzyme catalyses a 2'-deoxyribonucleoside 5'-diphosphate + ATP = a 2'-deoxyribonucleoside 5'-triphosphate + ADP. It carries out the reaction a ribonucleoside 5'-diphosphate + ATP = a ribonucleoside 5'-triphosphate + ADP. Major role in the synthesis of nucleoside triphosphates other than ATP. The ATP gamma phosphate is transferred to the NDP beta phosphate via a ping-pong mechanism, using a phosphorylated active-site intermediate. This Chelativorans sp. (strain BNC1) protein is Nucleoside diphosphate kinase.